Consider the following 275-residue polypeptide: Glucosamine-6-phosphate deaminase 2 (275 aa).

The active-site Proton acceptor; for enolization step is Asp72. The stretch at Asn102–Ile131 forms a coiled coil. Catalysis depends on Asp141, which acts as the For ring-opening step. The active-site Proton acceptor; for ring-opening step is the His143. The active-site For ring-opening step is Glu148.

This sequence belongs to the glucosamine/galactosamine-6-phosphate isomerase family. Homohexamer.

It is found in the cytoplasm. It carries out the reaction alpha-D-glucosamine 6-phosphate + H2O = beta-D-fructose 6-phosphate + NH4(+). In terms of biological role, catalyzes the reversible conversion of alpha-D-glucosamine 6-phosphate (GlcN-6P) into beta-D-fructose 6-phosphate (Fru-6P) and ammonium ion, a regulatory reaction step in de novo uridine diphosphate-N-acetyl-alpha-D-glucosamine (UDP-GlcNAc) biosynthesis via hexosamine pathway. This chain is Glucosamine-6-phosphate deaminase 2, found in Xenopus laevis (African clawed frog).